Reading from the N-terminus, the 435-residue chain is WD repeat domain phosphoinositide-interacting protein 2 (435 aa).

One copy of the WD 1 repeat lies at 182–222; that stretch reads AHDSPLAALAFDASGTKLATASEKGTVIRVFSIPEGQKLFE. Positions 223–226 match the L/FRRG motif motif; it reads FRRG. 2 WD repeats span residues 228–267 and 311–349; these read KRCV…EKPP and GHKN…GGEC. Positions 386-435 are disordered; it reads VTKTYPPPSPTRHAYADDLGAVGGASEEDEMGNLRLDEDNENPPMILQTE.

Belongs to the WD repeat PROPPIN family.

It is found in the preautophagosomal structure membrane. Its function is as follows. Component of the autophagy machinery that controls the major intracellular degradation process by which cytoplasmic materials are packaged into autophagosomes and delivered to lysosomes for degradation. Involved in an early step of the formation of preautophagosomal structures. This Xenopus laevis (African clawed frog) protein is WD repeat domain phosphoinositide-interacting protein 2 (wipi2).